Here is a 67-residue protein sequence, read N- to C-terminus: UPF0434 protein Tcr_0959 (67 aa).

The protein belongs to the UPF0434 family.

This is UPF0434 protein Tcr_0959 from Hydrogenovibrio crunogenus (strain DSM 25203 / XCL-2) (Thiomicrospira crunogena).